Reading from the N-terminus, the 213-residue chain is Protein Syd (213 aa).

Belongs to the Syd family.

The protein localises to the cell inner membrane. In terms of biological role, interacts with the SecY protein in vivo. May bind preferentially to an uncomplexed state of SecY, thus functioning either as a chelating agent for excess SecY in the cell or as a regulatory factor that negatively controls the translocase function. The chain is Protein Syd from Shewanella pealeana (strain ATCC 700345 / ANG-SQ1).